The sequence spans 558 residues: Dihydroxy-acid dehydratase (558 aa).

Cysteine 50 provides a ligand contact to [2Fe-2S] cluster. Aspartate 82 is a Mg(2+) binding site. Cysteine 123 is a binding site for [2Fe-2S] cluster. Mg(2+)-binding residues include aspartate 124 and lysine 125. Lysine 125 carries the N6-carboxylysine modification. [2Fe-2S] cluster is bound at residue cysteine 195. Glutamate 447 serves as a coordination point for Mg(2+). Residue serine 472 is the Proton acceptor of the active site.

Belongs to the IlvD/Edd family. As to quaternary structure, homodimer. [2Fe-2S] cluster is required as a cofactor. The cofactor is Mg(2+).

It carries out the reaction (2R)-2,3-dihydroxy-3-methylbutanoate = 3-methyl-2-oxobutanoate + H2O. It catalyses the reaction (2R,3R)-2,3-dihydroxy-3-methylpentanoate = (S)-3-methyl-2-oxopentanoate + H2O. Its pathway is amino-acid biosynthesis; L-isoleucine biosynthesis; L-isoleucine from 2-oxobutanoate: step 3/4. It functions in the pathway amino-acid biosynthesis; L-valine biosynthesis; L-valine from pyruvate: step 3/4. Functionally, functions in the biosynthesis of branched-chain amino acids. Catalyzes the dehydration of (2R,3R)-2,3-dihydroxy-3-methylpentanoate (2,3-dihydroxy-3-methylvalerate) into 2-oxo-3-methylpentanoate (2-oxo-3-methylvalerate) and of (2R)-2,3-dihydroxy-3-methylbutanoate (2,3-dihydroxyisovalerate) into 2-oxo-3-methylbutanoate (2-oxoisovalerate), the penultimate precursor to L-isoleucine and L-valine, respectively. In Saccharolobus islandicus (strain L.S.2.15 / Lassen #1) (Sulfolobus islandicus), this protein is Dihydroxy-acid dehydratase.